The following is a 72-amino-acid chain: MREGIHPEYNHDVLVKCACGNTFTTGSTNKELKVEICSKCHPFFTGKQKIVDAGGRVDKFMKKFNLSNEDVK.

Cys-17, Cys-19, Cys-37, and Cys-40 together coordinate Zn(2+).

Belongs to the bacterial ribosomal protein bL31 family. Type A subfamily. As to quaternary structure, part of the 50S ribosomal subunit. Requires Zn(2+) as cofactor.

Its function is as follows. Binds the 23S rRNA. The chain is Large ribosomal subunit protein bL31 from Clostridium botulinum (strain Loch Maree / Type A3).